The sequence spans 302 residues: Eukaryotic translation initiation factor 3 subunit F (302 aa).

Positions Ile23–Gly165 constitute an MPN domain. Ser162 carries the phosphoserine modification.

This sequence belongs to the eIF-3 subunit F family. As to quaternary structure, component of the eukaryotic translation initiation factor 3 (eIF-3) complex. The eIF-3 complex appears to include tif32/eif3a, SPAC25G10.08/eif3b, tif33/eif3c, SPBC4C3.07/eif3f, tif35/eif3g and sum1/eif3i. This set of common subunits may also associate exclusively with either moe1/eif3d and int6/eif3e, or with SPAC821.05/eif3h and SPAC1751.03/eif3m. The eIF-3 complex may also include SPAC3A12.13c/eif3j.

The protein localises to the cytoplasm. Its function is as follows. Component of the eukaryotic translation initiation factor 3 (eIF-3) complex, which is involved in protein synthesis of a specialized repertoire of mRNAs and, together with other initiation factors, stimulates binding of mRNA and methionyl-tRNAi to the 40S ribosome. The eIF-3 complex specifically targets and initiates translation of a subset of mRNAs involved in cell proliferation. The protein is Eukaryotic translation initiation factor 3 subunit F of Schizosaccharomyces pombe (strain 972 / ATCC 24843) (Fission yeast).